The primary structure comprises 118 residues: Co-chaperonin GroES (118 aa).

Belongs to the GroES chaperonin family. In terms of assembly, heptamer of 7 subunits arranged in a ring. Interacts with the chaperonin GroEL.

Its subcellular location is the cytoplasm. Its function is as follows. Together with the chaperonin GroEL, plays an essential role in assisting protein folding. The GroEL-GroES system forms a nano-cage that allows encapsulation of the non-native substrate proteins and provides a physical environment optimized to promote and accelerate protein folding. GroES binds to the apical surface of the GroEL ring, thereby capping the opening of the GroEL channel. This chain is Co-chaperonin GroES, found in Helicobacter pylori (strain G27).